Here is a 360-residue protein sequence, read N- to C-terminus: Mannose-1-phosphate guanylyltransferase catalytic subunit beta (360 aa).

A substrate-binding domain region spans residues 2–222 (KALILVGGYG…QGFWMDIGQP (221 aa)). Aspartate 110 provides a ligand contact to GDP-alpha-D-mannose. Aspartate 110 lines the Mg(2+) pocket. The active site involves lysine 162. Aspartate 218 is a GDP-alpha-D-mannose binding site. Residue aspartate 218 coordinates Mg(2+). The segment at 245–360 (CSGPGIVGNV…ESVPEPRIIM (116 aa)) is hexapeptide repeat domain.

This sequence belongs to the transferase hexapeptide repeat family. As to quaternary structure, component of the GMPPA-GMPPB mannose-1-phosphate guanylyltransferase complex composed of 4 GMPPA subunits and 8 GMPPB subunits; the complex is organized into three layers, a central layer made up of 2 GMPPA dimers sandwiched between two layers each made up of 2 GMPPB dimers. GMPPB catalytic activity is reduced when part of the complex and binding of GDP-alpha-D-Mannose by GMPPA induces allosteric feedback inhibition of GMPPB. Mg(2+) serves as cofactor. Ubiquitously expressed, including in brain and skeletal muscle. In terms of tissue distribution, weakly expressed with highest expression in skeletal muscle, brain and gonads.

It is found in the cytoplasm. The catalysed reaction is alpha-D-mannose 1-phosphate + GTP + H(+) = GDP-alpha-D-mannose + diphosphate. It functions in the pathway nucleotide-sugar biosynthesis; GDP-alpha-D-mannose biosynthesis; GDP-alpha-D-mannose from alpha-D-mannose 1-phosphate (GTP route): step 1/1. Enzyme activity is reduced by incorporation into the GMPPA-GMPPB mannose-1-phosphate guanylyltransferase complex. Allosterically inhibited, when part of the GMPPA-GMPPB complex, by GDP-alpha-D-mannose binding to GMPPA. Catalytic subunit of the GMPPA-GMPPB mannose-1-phosphate guanylyltransferase complex. Catalyzes the formation of GDP-mannose, an essential precursor of glycan moieties of glycoproteins and glycolipids. Can catalyze the reverse reaction in vitro. Together with GMPPA regulates GDP-alpha-D-mannose levels. This Homo sapiens (Human) protein is Mannose-1-phosphate guanylyltransferase catalytic subunit beta.